The following is a 746-amino-acid chain: SNF-related serine/threonine-protein kinase (746 aa).

The region spanning 16-269 is the Protein kinase domain; the sequence is YDLDKTLGRG…LEEIESHPWL (254 aa). Residues 22-30 and lysine 45 each bind ATP; that span reads LGRGHFAVV. Aspartate 139 (proton acceptor) is an active-site residue. Serine 162 is subject to Phosphoserine. Phosphothreonine; by LKB1 is present on threonine 173. The UBA domain occupies 291–334; it reads SEEEHNSIIQRMVLGDIADRDAIVEALETNRYNHITATYFLLAE. Phosphoserine is present on residues serine 362, serine 390, serine 482, serine 495, and serine 518. A disordered region spans residues 383 to 414; sequence SHATVPQSPARAGDSVLNGHRSKGLCDPAKKD. Acidic residues predominate over residues 494–503; it reads ESDDEFDMDE. The interval 494 to 638 is disordered; it reads ESDDEFDMDE…SSSSSPASAA (145 aa). Residues 522 to 532 show a composition bias toward basic residues; that stretch reads VHKRYHRRKSQ. Residues 533–542 are compositionally biased toward low complexity; sequence GRGSSCSSSE. At arginine 534 the chain carries Omega-N-methylarginine. Over residues 549-558 the composition is skewed to basic and acidic residues; it reads ESRRRLDKDS. Gly residues-rich tracts occupy residues 575 to 592 and 600 to 614; these read GSEG…GGGV and QGTG…GGTP. A compositionally biased stretch (low complexity) spans 615–638; that stretch reads SGTAGSSRRCAGPDSSSSSPASAA.

Belongs to the protein kinase superfamily. CAMK Ser/Thr protein kinase family. The cofactor is Mg(2+). Autophosphorylated. Phosphorylation on Thr-173 by STK11/LKB1 in complex with STE20-related adapter-alpha (STRADA) pseudo kinase and CAB39. Ubiquitously expressed in all tissues examined with highest levels in the brain and testis. Strongly expressed in the pyramidal and granule neurons of the hippocampus and also in the cerebellum.

The protein resides in the nucleus. It carries out the reaction L-seryl-[protein] + ATP = O-phospho-L-seryl-[protein] + ADP + H(+). It catalyses the reaction L-threonyl-[protein] + ATP = O-phospho-L-threonyl-[protein] + ADP + H(+). Activated by phosphorylation on Thr-173. May play a role in hematopoietic cell proliferation or differentiation. Potential mediator of neuronal apoptosis. This chain is SNF-related serine/threonine-protein kinase, found in Rattus norvegicus (Rat).